We begin with the raw amino-acid sequence, 720 residues long: ATP-dependent DNA helicase Hel308 (720 aa).

ATP contacts are provided by residues Ser-23, Gln-28, and 46–53 (IPTASGKT). Residues 33–197 (KSGILEGKNA…WLNAELIVSD (165 aa)) enclose the Helicase ATP-binding domain. The short motif at 145–148 (DEIH) is the DEAH box element. Positions 229–422 (LVYDAIRKKK…NLRSQVLALI (194 aa)) constitute a Helicase C-terminal domain.

Belongs to the helicase family. Hel308 subfamily. In terms of assembly, monomer. Interacts with PCNA. The cofactor is Mg(2+). Zn(2+) serves as cofactor.

The catalysed reaction is Couples ATP hydrolysis with the unwinding of duplex DNA by translocating in the 3'-5' direction.. It carries out the reaction ATP + H2O = ADP + phosphate + H(+). Functionally, DNA-dependent ATPase and 3'-5' DNA helicase that may be involved in repair of stalled replication forks. Unwinds the lagging strand from forked DNA structures in a 3'-5' direction. PCNA, the DNA polymerase sliding clamp subunit, stimulates the helicase activity, and may alter substrate specificity. Unwinds branched DNA (Holliday junctions) in an ATP-dependent fashion; ss- and dsDNA stimulate ATPase to the greatest extent, although it preferentially binds DNA with a single-stranded region. Processes a RecA-mediated recombination intermediate between gapped circular and homologous linear dsDNA. The protein is ATP-dependent DNA helicase Hel308 of Pyrococcus furiosus (strain ATCC 43587 / DSM 3638 / JCM 8422 / Vc1).